Reading from the N-terminus, the 670-residue chain is Sodium, potassium, lithium and rubidium/H(+) antiporter (670 aa).

Helical transmembrane passes span 5–27 (LVVL…IPFI), 46–66 (GLHF…PLLF), 83–103 (PILL…GYTI), 105–125 (WMIP…LSPT), 156–176 (ASGL…AFSL), 182–202 (SFVF…FLII), 228–248 (FVIY…VVAG), 276–296 (IILF…IPDV), 314–334 (YILV…LFFW), 355–375 (LLIS…FSIP), and 389–409 (LILF…TVVL).

The protein belongs to the monovalent cation:proton antiporter 1 (CPA1) transporter (TC 2.A.36) family. Nhak (TC 2.A.36.3.2) subfamily.

The protein resides in the cell membrane. Functionally, transporter involved in the efflux of sodium, potassium, lithium and rubidium. The chain is Sodium, potassium, lithium and rubidium/H(+) antiporter (nhaK) from Bacillus subtilis (strain 168).